A 356-amino-acid chain; its full sequence is Myricetin 7/4'-O-methyltransferase 2 (356 aa).

Asp-222 is a binding site for S-adenosyl-L-methionine. His-260 functions as the Proton acceptor in the catalytic mechanism.

Belongs to the class I-like SAM-binding methyltransferase superfamily. Cation-independent O-methyltransferase family. In terms of assembly, homodimer.

It catalyses the reaction quercetin + S-adenosyl-L-methionine = rhamnetin + S-adenosyl-L-homocysteine + H(+). The enzyme catalyses kaempferol + S-adenosyl-L-methionine = kaempferide + S-adenosyl-L-homocysteine + H(+). The catalysed reaction is myricetin + S-adenosyl-L-methionine = 7-O-methylmyricetin + S-adenosyl-L-homocysteine + H(+). It carries out the reaction kaempferide + S-adenosyl-L-methionine = 7,4'-O-dimethylkaempferol + S-adenosyl-L-homocysteine + H(+). It catalyses the reaction isorhamnetin + S-adenosyl-L-methionine = 3',4'-O-dimethylquercetin + S-adenosyl-L-homocysteine + 2 H(+). The enzyme catalyses 3',4',5,7-tetrahydroxy-3-methoxyflavone + S-adenosyl-L-methionine = 3',4',5-trihydroxy-3,7-dimethoxyflavone + S-adenosyl-L-homocysteine + H(+). The catalysed reaction is rhamnetin + S-adenosyl-L-methionine = 7,4'-O-dimethylquercetin + S-adenosyl-L-homocysteine + H(+). It carries out the reaction syringetin + S-adenosyl-L-methionine = 7,3',5'-O-trimethylmyricetin + S-adenosyl-L-homocysteine + H(+). It catalyses the reaction 3',4',5'-O-trimethylmyricetin + S-adenosyl-L-methionine = 7,3',4',5'-O-tetramethylmyricetin + S-adenosyl-L-homocysteine. Its pathway is flavonoid metabolism. Its function is as follows. Flavonoid 7/4'-O-methyltransferase involved in the biosynthesis of polymethoxylated flavonoids natural products such as myricetin derivatives, aroma compounds possessing antioxidant properties and exhibiting pharmacological activities such as anti-carcinogen, anti-viral, anti-thrombotic, anti-diabetic, anti-atherosclerotic, and anti-inflammatory effects. Catalyzes S-adenosylmethionine-dependent regioselective 7/4'-O-methylation of flavonoids; active on various hydroxylated flavonoid substrates. This Solanum lycopersicum (Tomato) protein is Myricetin 7/4'-O-methyltransferase 2.